The sequence spans 460 residues: Baeyer-Villiger oxidase AgnL3 (460 aa).

This sequence belongs to the questin oxidase family. NADPH serves as cofactor.

The protein operates within secondary metabolite biosynthesis. Its function is as follows. Baeyer-Villiger oxidase; part of the gene cluster that mediates the biosynthesis of agnestins, dihydroxy-xanthone metabolites. The pathway begins with the assembly and cyclization of atrochrysone thioester by the non-reducing polyketide synthase Agnpks1. The atrochrysone carboxyl ACP thioesterase AgnL7 then breaks the thioester bond and releases the atrochrysone carboxylic acid as the first enzyme-free intermediate. The decarboxylase AgnL1 then catalyzes the concerted decarboxylation-elimination required to convert atochrysone carboxylic acid into emodin anthrone, which is further oxidized to emodin by the anthrone oxygenase AgnL2. Emodin then undergoes reduction catalyzed by the oxidoreductase AgnL4 to yield the dihydroquinone tautomer which is the substrate for reduction by the short chain dehydrogenase AgnL6 reduction to produce hydroxyketone, followed by AgnL8 dehydration and likely spontaneous autoxidation to chrysophanol. Baeyer-Villiger oxidation by the oxidase AgnL3 leads to monodictyphenone via cleavage of the C-10/C-10a bond of chrysophanol. Alternative cleavage at the C-4a/C-10 bond of chrysophanol also leads to the formation some cephalone F. Further conversion to agnestins A and B, requires reduction to dihydro-monodictyphenone, oxidation to agnestin C probably via an epoxide, and rearrangement to either agnestin A or agnestin B directly, although agnestin A or agnestin B can also interconvert. Within the cluster, AgnR1 is the only unassigned oxidoreductase present which could be involved in this conversion. However, AgnR1 seems not to be involved in this step, and thus genes involved in the proposed oxidation/reduction may be located elsewhere on the genome. Further agnestin A derivatives are probably formed by spontaneous decarboxylations, dehydrations and methanolysis reactions. The sequence is that of Baeyer-Villiger oxidase AgnL3 from Paecilomyces divaricatus (Penicillium divaricatum).